The chain runs to 254 residues: Imidazole glycerol phosphate synthase subunit HisF (254 aa).

Catalysis depends on residues Asp12 and Asp131.

It belongs to the HisA/HisF family. Heterodimer of HisH and HisF.

It localises to the cytoplasm. The enzyme catalyses 5-[(5-phospho-1-deoxy-D-ribulos-1-ylimino)methylamino]-1-(5-phospho-beta-D-ribosyl)imidazole-4-carboxamide + L-glutamine = D-erythro-1-(imidazol-4-yl)glycerol 3-phosphate + 5-amino-1-(5-phospho-beta-D-ribosyl)imidazole-4-carboxamide + L-glutamate + H(+). It participates in amino-acid biosynthesis; L-histidine biosynthesis; L-histidine from 5-phospho-alpha-D-ribose 1-diphosphate: step 5/9. In terms of biological role, IGPS catalyzes the conversion of PRFAR and glutamine to IGP, AICAR and glutamate. The HisF subunit catalyzes the cyclization activity that produces IGP and AICAR from PRFAR using the ammonia provided by the HisH subunit. This chain is Imidazole glycerol phosphate synthase subunit HisF, found in Janthinobacterium sp. (strain Marseille) (Minibacterium massiliensis).